The following is a 265-amino-acid chain: Pre-mRNA-splicing factor cwf15 (265 aa).

Disordered stretches follow at residues 1 to 31 (MTTAHRPQFDPARGHSEMAPTRITSSRALPA) and 62 to 197 (AAHF…ALEQ). The segment covering 113–125 (EADEDASDSDDSV) has biased composition (acidic residues). The segment covering 143–155 (SNSQESVDSSNSE) has biased composition (low complexity). Residues 155–205 (ESSDEESDSEDETQQLLRELENIKQERKREQMLQEEKNRALEQEKREREIA) adopt a coiled-coil conformation. Acidic residues predominate over residues 156-167 (SSDEESDSEDET). Over residues 172-197 (RELENIKQERKREQMLQEEKNRALEQ) the composition is skewed to basic and acidic residues.

Belongs to the CWC15 family. As to quaternary structure, belongs to the 40S cdc5-associated complex (or cwf complex), a spliceosome sub-complex reminiscent of a late-stage spliceosome composed of the U2, U5 and U6 snRNAs and at least brr2, cdc5, cwf2/prp3, cwf3/syf1, cwf4/syf3, cwf5/ecm2, spp42/cwf6, cwf7/spf27, cwf8, cwf9, cwf10, cwf11, cwf12, prp45/cwf13, cwf14, cwf15, cwf16, cwf17, cwf18, cwf19, cwf20, cwf21, cwf22, cwf23, cwf24, cwf25, cwf26, cyp7/cwf27, cwf28, cwf29/ist3, lea1, msl1, prp5/cwf1, prp10, prp12/sap130, prp17, prp22, sap61, sap62, sap114, sap145, slu7, smb1, smd1, smd3, smf1, smg1 and syf2.

Its subcellular location is the nucleus. Involved in pre-mRNA splicing. This Schizosaccharomyces pombe (strain 972 / ATCC 24843) (Fission yeast) protein is Pre-mRNA-splicing factor cwf15 (cwf15).